We begin with the raw amino-acid sequence, 393 residues long: Phosphopentomutase (393 aa).

Positions 14, 287, 292, 328, 329, and 340 each coordinate Mn(2+).

This sequence belongs to the phosphopentomutase family. The cofactor is Mn(2+).

It localises to the cytoplasm. The enzyme catalyses 2-deoxy-alpha-D-ribose 1-phosphate = 2-deoxy-D-ribose 5-phosphate. The catalysed reaction is alpha-D-ribose 1-phosphate = D-ribose 5-phosphate. Its pathway is carbohydrate degradation; 2-deoxy-D-ribose 1-phosphate degradation; D-glyceraldehyde 3-phosphate and acetaldehyde from 2-deoxy-alpha-D-ribose 1-phosphate: step 1/2. Isomerase that catalyzes the conversion of deoxy-ribose 1-phosphate (dRib-1-P) and ribose 1-phosphate (Rib-1-P) to deoxy-ribose 5-phosphate (dRib-5-P) and ribose 5-phosphate (Rib-5-P), respectively. The sequence is that of Phosphopentomutase from Geobacillus stearothermophilus (Bacillus stearothermophilus).